The chain runs to 494 residues: Vacuolar-processing enzyme (494 aa).

Residues 1–20 (MTRLASGVLITLLVALAGIA) form the signal peptide. Asn-151 is a glycosylation site (N-linked (GlcNAc...) asparagine). His-178 is a catalytic residue. The Nucleophile role is filled by Cys-220. Cys-253 and Cys-267 are joined by a disulfide. The N-linked (GlcNAc...) asparagine glycan is linked to Asn-336. Cystine bridges form between Cys-430–Cys-460 and Cys-442–Cys-477.

This sequence belongs to the peptidase C13 family. In terms of tissue distribution, high levels are seen in the flowers, a lower level expression is seen in the leaves, while very low levels are seen in the stems and roots.

In terms of biological role, asparagine-specific endopeptidase that may be involved in processing of proteins targeted to vacuoles that accumulate during ethylene-regulated processes such as flower opening and flavedo degreening. This chain is Vacuolar-processing enzyme, found in Citrus sinensis (Sweet orange).